A 225-amino-acid chain; its full sequence is NAD(P)H-quinone oxidoreductase subunit K, chloroplastic (225 aa).

4 residues coordinate [4Fe-4S] cluster: Cys43, Cys44, Cys108, and Cys139.

Belongs to the complex I 20 kDa subunit family. In terms of assembly, NDH is composed of at least 16 different subunits, 5 of which are encoded in the nucleus. [4Fe-4S] cluster is required as a cofactor.

It localises to the plastid. It is found in the chloroplast thylakoid membrane. It carries out the reaction a plastoquinone + NADH + (n+1) H(+)(in) = a plastoquinol + NAD(+) + n H(+)(out). The catalysed reaction is a plastoquinone + NADPH + (n+1) H(+)(in) = a plastoquinol + NADP(+) + n H(+)(out). In terms of biological role, NDH shuttles electrons from NAD(P)H:plastoquinone, via FMN and iron-sulfur (Fe-S) centers, to quinones in the photosynthetic chain and possibly in a chloroplast respiratory chain. The immediate electron acceptor for the enzyme in this species is believed to be plastoquinone. Couples the redox reaction to proton translocation, and thus conserves the redox energy in a proton gradient. This Populus alba (White poplar) protein is NAD(P)H-quinone oxidoreductase subunit K, chloroplastic.